Consider the following 327-residue polypeptide: MQDLRLILIVVGAIAIIALLLHGLWTSRKERSSLFRDRPVKRTKQERVETPIESLDEGVGEVRVRTSHPQEKPSFNHLDDDDDEVPVIQHAETKSAQVKTASRQAPFASVQTDYDDPLLGGLSAEQPPHDLSRDPLLGKADESYSQPQHAEPPHVEKPAHQVAPQQHVESQQEPVAPAPEAKPQKLKETVLVLHVAAHHGGVIGGEVLLQSVLQSGFQFGEMGIFHRHLSPAGSGPVLFSLANMVKPGSFDPDTMSDFSTPGVSMFMMVPSYGDANQNFKLMLQSAQRIADDVGGVVLDDERRMMTPQKLESYKARIREVLDANTIA.

Residues 1–5 are Periplasmic-facing; sequence MQDLR. A helical transmembrane segment spans residues 6 to 26; that stretch reads LILIVVGAIAIIALLLHGLWT. Residues 27 to 327 are Cytoplasmic-facing; sequence SRKERSSLFR…REVLDANTIA (301 aa). Positions 60-71 are enriched in basic and acidic residues; the sequence is GEVRVRTSHPQE. Residues 60-182 are disordered; sequence GEVRVRTSHP…EPVAPAPEAK (123 aa). Composition is skewed to polar residues over residues 94–103 and 163–173; these read KSAQVKTASR and APQQHVESQQE.

Belongs to the ZipA family. Interacts with FtsZ via their C-terminal domains.

The protein resides in the cell inner membrane. Functionally, essential cell division protein that stabilizes the FtsZ protofilaments by cross-linking them and that serves as a cytoplasmic membrane anchor for the Z ring. Also required for the recruitment to the septal ring of downstream cell division proteins. This chain is Cell division protein ZipA, found in Yersinia pseudotuberculosis serotype O:1b (strain IP 31758).